The sequence spans 83 residues: ATP synthase subunit c, chloroplastic (83 aa).

2 consecutive transmembrane segments (helical) span residues 3 to 23 and 57 to 77; these read PLIA…AAIG and FAFM…LLFA.

It belongs to the ATPase C chain family. As to quaternary structure, F-type ATPases have 2 components, F(1) - the catalytic core - and F(0) - the membrane proton channel. F(1) has five subunits: alpha(3), beta(3), gamma(1), delta(1), epsilon(1). F(0) has four main subunits: a(1), b(1), b'(1) and c(10-14). The alpha and beta chains form an alternating ring which encloses part of the gamma chain. F(1) is attached to F(0) by a central stalk formed by the gamma and epsilon chains, while a peripheral stalk is formed by the delta, b and b' chains.

The protein resides in the plastid. The protein localises to the chloroplast thylakoid membrane. Its function is as follows. F(1)F(0) ATP synthase produces ATP from ADP in the presence of a proton or sodium gradient. F-type ATPases consist of two structural domains, F(1) containing the extramembraneous catalytic core and F(0) containing the membrane proton channel, linked together by a central stalk and a peripheral stalk. During catalysis, ATP synthesis in the catalytic domain of F(1) is coupled via a rotary mechanism of the central stalk subunits to proton translocation. Functionally, key component of the F(0) channel; it plays a direct role in translocation across the membrane. A homomeric c-ring of between 10-14 subunits forms the central stalk rotor element with the F(1) delta and epsilon subunits. The polypeptide is ATP synthase subunit c, chloroplastic (Oedogonium cardiacum (Filamentous green alga)).